We begin with the raw amino-acid sequence, 168 residues long: Protein YciE (168 aa).

The chain is Protein YciE (yciE) from Escherichia coli (strain K12).